Here is a 375-residue protein sequence, read N- to C-terminus: Succinyl-diaminopimelate desuccinylase (375 aa).

His66 is a binding site for Zn(2+). The active site involves Asp68. Zn(2+) is bound at residue Asp99. Glu133 functions as the Proton acceptor in the catalytic mechanism. Zn(2+) is bound by residues Glu134, Glu162, and His348.

The protein belongs to the peptidase M20A family. DapE subfamily. As to quaternary structure, homodimer. Requires Zn(2+) as cofactor. Co(2+) serves as cofactor.

It catalyses the reaction N-succinyl-(2S,6S)-2,6-diaminopimelate + H2O = (2S,6S)-2,6-diaminopimelate + succinate. It participates in amino-acid biosynthesis; L-lysine biosynthesis via DAP pathway; LL-2,6-diaminopimelate from (S)-tetrahydrodipicolinate (succinylase route): step 3/3. Its function is as follows. Catalyzes the hydrolysis of N-succinyl-L,L-diaminopimelic acid (SDAP), forming succinate and LL-2,6-diaminopimelate (DAP), an intermediate involved in the bacterial biosynthesis of lysine and meso-diaminopimelic acid, an essential component of bacterial cell walls. This chain is Succinyl-diaminopimelate desuccinylase, found in Shigella boydii serotype 18 (strain CDC 3083-94 / BS512).